We begin with the raw amino-acid sequence, 128 residues long: Entry-fusion complex protein OPG094 (128 aa).

The Intravirion segment spans residues 1-30 (MENVPNVYFNPVFIEPTFKHSLLSVYKHRL). The helical; Signal-anchor for type III membrane protein transmembrane segment at 31 to 51 (IVLFEVFVVFILIYVFFRSEL) threads the bilayer. Topologically, residues 52 to 107 (NMFFMHKRKIPDPIDRLRRANLACEDDKLMIYGLPWITTQTSALSINSKPIVYKDC) are virion surface. A disulfide bridge links C75 with C107.

The protein belongs to the orthopoxvirus OPG099 family. In terms of assembly, interacts with OPG086. Component of the entry fusion complex (EFC) composed of OPG053, OPG076, OPG086, OPG094, OPG095, OPG099, OPG107, OPG143, OPG104J5, OPG147 and OPG155. Except for OPG095 and OPG053, each of the EFC proteins is required for assembly or stability of the complex. Post-translationally, most cysteines are linked by disulfide bonds. They are created by the viral disulfide bond formation pathway, a poxvirus-specific redox pathway that operates on the cytoplasmic side of the MV membranes. In terms of processing, unglycosylated because produced in viral factories instead of the classic ER -Golgi route.

Its subcellular location is the virion membrane. Its function is as follows. Component of the entry fusion complex (EFC), which consists of 11 proteins. During cell infection, this complex mediates entry of the virion core into the host cytoplasm by a two-step mechanism consisting of lipid mixing of the viral and cellular membranes and subsequent pore formation. In Homo sapiens (Human), this protein is Entry-fusion complex protein OPG094 (OPG099).